We begin with the raw amino-acid sequence, 263 residues long: Diphthine synthase (263 aa).

S-adenosyl-L-methionine contacts are provided by residues Leu-11, Asp-89, Ala-92, 117-118 (SV), Leu-166, and Leu-208.

It belongs to the diphthine synthase family. In terms of assembly, homodimer.

The catalysed reaction is 2-[(3S)-amino-3-carboxypropyl]-L-histidyl-[translation elongation factor 2] + 3 S-adenosyl-L-methionine = diphthine-[translation elongation factor 2] + 3 S-adenosyl-L-homocysteine + 3 H(+). It functions in the pathway protein modification; peptidyl-diphthamide biosynthesis. Functionally, S-adenosyl-L-methionine-dependent methyltransferase that catalyzes the trimethylation of the amino group of the modified target histidine residue in translation elongation factor 2 (EF-2), to form an intermediate called diphthine. The three successive methylation reactions represent the second step of diphthamide biosynthesis. The polypeptide is Diphthine synthase (Methanopyrus kandleri (strain AV19 / DSM 6324 / JCM 9639 / NBRC 100938)).